Reading from the N-terminus, the 479-residue chain is Anaerobic nitric oxide reductase flavorubredoxin (479 aa).

The interval 30 to 210 is zinc metallo-hydrolase; sequence LRGSSYNSYL…PFSRLVTPKI (181 aa). Residues H79, E81, D83, H147, D166, and H227 each contribute to the Fe cation site. The 140-residue stretch at 254-393 folds into the Flavodoxin-like domain; the sequence is ITIFYDTMSN…LCREHGREIA (140 aa). Residues 260 to 264 and 342 to 369 contribute to the FMN site; these read TMSNN and AFGSHGWSGGAVDRLSTRLQDAGFEMSL. Residues 423–474 form the Rubredoxin-like domain; it reads GPRMQCSVCQWIYDPAKGEPMQDVAPGTPWSEVPDNFLCPECSLGKDVFEEL. Fe cation is bound by residues C428, C431, C461, and C464.

This sequence in the N-terminal section; belongs to the zinc metallo-hydrolase group 3 family. In terms of assembly, homotetramer. Fe cation is required as a cofactor. It depends on FMN as a cofactor.

It is found in the cytoplasm. It functions in the pathway nitrogen metabolism; nitric oxide reduction. Its function is as follows. Anaerobic nitric oxide reductase; uses NADH to detoxify nitric oxide (NO), protecting several 4Fe-4S NO-sensitive enzymes. Has at least 2 reductase partners, only one of which (NorW, flavorubredoxin reductase) has been identified. NO probably binds to the di-iron center; electrons enter from the NorW at rubredoxin and are transferred sequentially to the FMN center and the di-iron center. Also able to function as an aerobic oxygen reductase. This is Anaerobic nitric oxide reductase flavorubredoxin from Escherichia coli O139:H28 (strain E24377A / ETEC).